The chain runs to 360 residues: D-alanine--D-alanine ligase (360 aa).

An ATP-grasp domain is found at K134–Q343. Position 169–224 (A169–E224) interacts with ATP. D297, E310, and N312 together coordinate Mg(2+).

This sequence belongs to the D-alanine--D-alanine ligase family. Mg(2+) is required as a cofactor. It depends on Mn(2+) as a cofactor.

The protein localises to the cytoplasm. It catalyses the reaction 2 D-alanine + ATP = D-alanyl-D-alanine + ADP + phosphate + H(+). The protein operates within cell wall biogenesis; peptidoglycan biosynthesis. Its function is as follows. Cell wall formation. This Lactobacillus acidophilus (strain ATCC 700396 / NCK56 / N2 / NCFM) protein is D-alanine--D-alanine ligase.